The following is a 160-amino-acid chain: Cyclic pyranopterin monophosphate synthase (160 aa).

Residues 77–79 (MCH) and 114–115 (ME) each bind substrate. Asp-129 is a catalytic residue.

This sequence belongs to the MoaC family. As to quaternary structure, homohexamer; trimer of dimers.

The enzyme catalyses (8S)-3',8-cyclo-7,8-dihydroguanosine 5'-triphosphate = cyclic pyranopterin phosphate + diphosphate. Its pathway is cofactor biosynthesis; molybdopterin biosynthesis. Functionally, catalyzes the conversion of (8S)-3',8-cyclo-7,8-dihydroguanosine 5'-triphosphate to cyclic pyranopterin monophosphate (cPMP). This is Cyclic pyranopterin monophosphate synthase from Listeria monocytogenes serotype 4a (strain HCC23).